The primary structure comprises 245 residues: Orotidine 5'-phosphate decarboxylase (245 aa).

Residues Asp22, Lys44, 71-80 (DLKFHDIPNT), Thr131, Arg192, Gln201, Gly221, and Arg222 contribute to the substrate site. Lys73 (proton donor) is an active-site residue.

The protein belongs to the OMP decarboxylase family. Type 1 subfamily. In terms of assembly, homodimer.

It catalyses the reaction orotidine 5'-phosphate + H(+) = UMP + CO2. It functions in the pathway pyrimidine metabolism; UMP biosynthesis via de novo pathway; UMP from orotate: step 2/2. Its function is as follows. Catalyzes the decarboxylation of orotidine 5'-monophosphate (OMP) to uridine 5'-monophosphate (UMP). In Shigella flexneri serotype 5b (strain 8401), this protein is Orotidine 5'-phosphate decarboxylase.